A 379-amino-acid polypeptide reads, in one-letter code: Chaperone protein DnaJ 2 (379 aa).

The 65-residue stretch at 4–68 folds into the J domain; it reads DYYAVLGVRR…QKKQVYDLGG (65 aa). The CR-type zinc finger occupies 130-212; the sequence is GTTKDIQVDT…CAGDGRVPSR (83 aa). 8 residues coordinate Zn(2+): Cys-143, Cys-146, Cys-160, Cys-163, Cys-186, Cys-189, Cys-200, and Cys-203. 4 CXXCXGXG motif repeats span residues 143–150, 160–167, 186–193, and 200–207; these read CNTCNGEG, CDMCRGRG, CPQCQGFA, and CPECAGDG. The disordered stretch occupies residues 351–379; that stretch reads RGEERPTGQFQPGQQGLFSRLKDAFNGRS. Residues 358-367 show a composition bias toward polar residues; sequence GQFQPGQQGL. The span at 370-379 shows a compositional bias: basic and acidic residues; it reads RLKDAFNGRS.

Belongs to the DnaJ family. As to quaternary structure, homodimer. It depends on Zn(2+) as a cofactor.

It localises to the cytoplasm. In terms of biological role, participates actively in the response to hyperosmotic and heat shock by preventing the aggregation of stress-denatured proteins and by disaggregating proteins, also in an autonomous, DnaK-independent fashion. Unfolded proteins bind initially to DnaJ; upon interaction with the DnaJ-bound protein, DnaK hydrolyzes its bound ATP, resulting in the formation of a stable complex. GrpE releases ADP from DnaK; ATP binding to DnaK triggers the release of the substrate protein, thus completing the reaction cycle. Several rounds of ATP-dependent interactions between DnaJ, DnaK and GrpE are required for fully efficient folding. Also involved, together with DnaK and GrpE, in the DNA replication of plasmids through activation of initiation proteins. In Streptomyces albus G, this protein is Chaperone protein DnaJ 2.